The primary structure comprises 505 residues: 2-isopropylmalate synthase (505 aa).

One can recognise a Pyruvate carboxyltransferase domain in the interval 5–269 (IKIFDTTLRD…ETGIHTEYLY (265 aa)). The Mn(2+) site is built by aspartate 14, histidine 204, histidine 206, and asparagine 240. Residues 393-505 (SLLYFHTFTG…AVNRFELRKR (113 aa)) are regulatory domain.

Belongs to the alpha-IPM synthase/homocitrate synthase family. LeuA type 1 subfamily. As to quaternary structure, homodimer. Mn(2+) is required as a cofactor.

The protein resides in the cytoplasm. It catalyses the reaction 3-methyl-2-oxobutanoate + acetyl-CoA + H2O = (2S)-2-isopropylmalate + CoA + H(+). Its pathway is amino-acid biosynthesis; L-leucine biosynthesis; L-leucine from 3-methyl-2-oxobutanoate: step 1/4. Functionally, catalyzes the condensation of the acetyl group of acetyl-CoA with 3-methyl-2-oxobutanoate (2-ketoisovalerate) to form 3-carboxy-3-hydroxy-4-methylpentanoate (2-isopropylmalate). This chain is 2-isopropylmalate synthase, found in Sediminispirochaeta smaragdinae (strain DSM 11293 / JCM 15392 / SEBR 4228) (Spirochaeta smaragdinae).